The sequence spans 1561 residues: ABC-type transporter phomO' (1561 aa).

7 helical membrane-spanning segments follow: residues 34 to 54, 110 to 130, 139 to 159, 172 to 192, 202 to 222, 314 to 334, and 358 to 378; these read LYFE…LLAA, CTAG…CTTV, SVPA…LAHF, SSSL…APLV, GSAL…LIAV, LGLY…FTLA, and GLIG…GWYW. The ABC transmembrane type-1 1 domain occupies 326-599; that stretch reads LCLAGFTLAQ…LLQIIPSFGA (274 aa). Residue Asn384 is glycosylated (N-linked (GlcNAc...) asparagine). Transmembrane regions (helical) follow at residues 428-448, 452-472, 535-555, and 577-597; these read LAYA…TWML, VGPP…TSTY, LIVG…VLVF, and LIWI…IPSF. One can recognise an ABC transporter 1 domain in the interval 645–871; the sequence is IHNSSFSYTD…VEDENGDVDN (227 aa). Asn647 is a glycosylation site (N-linked (GlcNAc...) asparagine). 678 to 685 lines the ATP pocket; that stretch reads GPAGCGKS. Asn721 carries an N-linked (GlcNAc...) asparagine glycan. The tract at residues 853–899 is disordered; it reads YQFPPSQADVEDENGDVDNGAENTRPRESSHTTEAQSGPPEPKSKPT. A run of 4 helical transmembrane segments spans residues 913–933, 969–989, 1037–1054, and 1147–1167; these read SIGF…AFCL, VLPL…IVPL, LFNT…VILI, and LVLN…AVGL. Positions 920-1209 constitute an ABC transmembrane type-1 2 domain; sequence VLFIGGGIIF…LLTAWTSLET (290 aa). Asn1189 carries an N-linked (GlcNAc...) asparagine glycan. Basic and acidic residues predominate over residues 1229–1238; sequence DVLVRPDSLD. A disordered region spans residues 1229 to 1298; the sequence is DVLVRPDSLD…DVAADGEKHE (70 aa). The span at 1269–1280 shows a compositional bias: acidic residues; that stretch reads YDDDDESDENTD. The ABC transporter 2 domain maps to 1297 to 1545; that stretch reads HEATTITTTS…SDIFAFFGRS (249 aa). An ATP-binding site is contributed by 1333-1340; that stretch reads GRTGSGKS. Asn1496 carries N-linked (GlcNAc...) asparagine glycosylation.

The protein belongs to the ABC transporter superfamily. ABCC family. Conjugate transporter (TC 3.A.1.208) subfamily.

It is found in the membrane. In terms of biological role, ABC-type transporter; part of the gene cluster that mediates the biosynthesis of the phomopsins, a group of hexapeptide mycotoxins which infects lupins and causes lupinosis disease in livestock. The polypeptide is ABC-type transporter phomO' (Diaporthe leptostromiformis (Lupinosis disease fungus)).